The sequence spans 213 residues: Ras-related protein Rab-19 (213 aa).

GTP contacts are provided by Ser24, Val26, Gly27, Lys28, Thr29, Cys30, Asp42, and Thr47. A Mg(2+)-binding site is contributed by Thr29. The Switch 1 motif lies at 37–52; it reads SGIFMDNQQNTIGVDF. Thr47 and Asp70 together coordinate Mg(2+). The Switch 2 signature appears at 72 to 87; it reads AGQERFRTITQSYYRS. 7 residues coordinate GTP: Gly73, Asn128, Lys129, Asp131, Ser159, Ala160, and Lys161. Residues Cys211 and Cys213 are each lipidated (S-geranylgeranyl cysteine). Cys213 is subject to Cysteine methyl ester.

It belongs to the small GTPase superfamily. Rab family. It depends on Mg(2+) as a cofactor.

The protein localises to the cell membrane. It carries out the reaction GTP + H2O = GDP + phosphate + H(+). With respect to regulation, regulated by guanine nucleotide exchange factors (GEFs) which promote the exchange of bound GDP for free GTP. Regulated by GTPase activating proteins (GAPs) which increase the GTP hydrolysis activity. Inhibited by GDP dissociation inhibitors (GDIs). Its function is as follows. The small GTPases Rab are key regulators of intracellular membrane trafficking, from the formation of transport vesicles to their fusion with membranes. Rabs cycle between an inactive GDP-bound form and an active GTP-bound form that is able to recruit to membranes different set of downstream effectors directly responsible for vesicle formation, movement, tethering and fusion. The polypeptide is Ras-related protein Rab-19 (rab19) (Xenopus laevis (African clawed frog)).